A 364-amino-acid polypeptide reads, in one-letter code: uncharacterized protein (364 aa).

The segment covering 1 to 17 has biased composition (acidic residues); sequence MEPGELMEVDTSQELDE. Residues 1–61 are disordered; the sequence is MEPGELMEVD…EEDQSSTETM (61 aa). The segment covering 19 to 31 has biased composition (basic and acidic residues); the sequence is TSAKETDQPKDAQ.

This is an uncharacterized protein from Caenorhabditis elegans.